Reading from the N-terminus, the 96-residue chain is Pollen allergen Dac g 3 (96 aa).

Residues 14 to 94 (KKLVLDIKYT…AFKIGTTYTP (81 aa)) form the Expansin-like CBD domain.

Belongs to the expansin family. Expansin B subfamily.

The protein resides in the secreted. This Dactylis glomerata (Orchard grass) protein is Pollen allergen Dac g 3.